A 128-amino-acid chain; its full sequence is MSKPKRERSLPENEAKAIARMLRVSPQKLNLVAQLIRGRKASAALADLQFSRKRIAGDVKKCLESAIANAENNHDLDVDELVVAQAFVGNGMVMKRFAPRGRGRSGRIYKPFSQLTIVVRQVEAEASA.

It belongs to the universal ribosomal protein uL22 family. As to quaternary structure, part of the 50S ribosomal subunit.

Functionally, this protein binds specifically to 23S rRNA; its binding is stimulated by other ribosomal proteins, e.g. L4, L17, and L20. It is important during the early stages of 50S assembly. It makes multiple contacts with different domains of the 23S rRNA in the assembled 50S subunit and ribosome. In terms of biological role, the globular domain of the protein is located near the polypeptide exit tunnel on the outside of the subunit, while an extended beta-hairpin is found that lines the wall of the exit tunnel in the center of the 70S ribosome. This Nitrobacter hamburgensis (strain DSM 10229 / NCIMB 13809 / X14) protein is Large ribosomal subunit protein uL22.